The following is a 306-amino-acid chain: uncharacterized protein (306 aa).

It belongs to the asfivirus CP312R family.

It localises to the virion. This is an uncharacterized protein from African swine fever virus (isolate Pig/Kenya/KEN-50/1950) (ASFV).